A 190-amino-acid polypeptide reads, in one-letter code: dCTP deaminase (190 aa).

DCTP contacts are provided by residues 113–118 (KSTYAR), 137–139 (TLE), Gln158, Tyr172, and Gln182. The active-site Proton donor/acceptor is Glu139.

Belongs to the dCTP deaminase family. In terms of assembly, homotrimer.

The enzyme catalyses dCTP + H2O + H(+) = dUTP + NH4(+). It functions in the pathway pyrimidine metabolism; dUMP biosynthesis; dUMP from dCTP (dUTP route): step 1/2. In terms of biological role, catalyzes the deamination of dCTP to dUTP. The polypeptide is dCTP deaminase (Chromobacterium violaceum (strain ATCC 12472 / DSM 30191 / JCM 1249 / CCUG 213 / NBRC 12614 / NCIMB 9131 / NCTC 9757 / MK)).